The sequence spans 485 residues: Endo-1,4-beta-xylanase C (485 aa).

The signal sequence occupies residues 1–19 (MKFLQIIPVLLSLTSTTLA). Residues 34 to 234 (KETGNKVGTI…GNGGVSGTAD (201 aa)) enclose the GH11 domain. Asparagine 56 and asparagine 107 each carry an N-linked (GlcNAc...) asparagine glycan. Glutamate 128 acts as the Nucleophile in catalysis. Residue asparagine 175 is glycosylated (N-linked (GlcNAc...) asparagine). Glutamate 221 (proton donor) is an active-site residue. Residues 250–450 (ASPAPAGGAP…PQNASDGGNC (201 aa)) form a disordered region. Low complexity-rich tracts occupy residues 265-330 (AGND…QGQH) and 344-354 (GSDFNNWSQGG). Tandem repeats lie at residues 275–280 (GQQPPQ), 281–286 (GQQPPQ), 287–292 (GQQPPQ), 293–298 (GQQPPQ), 299–304 (GQQPPQ), 310–315 (GQQPPQ), and 316–321 (GQQPPQ). Residues 275–321 (GQQPPQGQQPPQGQQPPQGQQPPQGQQPPQGNDQQGQQPPQGQQPPQ) form a 7 X 6 AA tandem repeats of G-Q-Q-P-P-Q region. The N-linked (GlcNAc...) asparagine glycan is linked to asparagine 349. Repeat copies occupy residues 353 to 361 (GGSPWGGNQ), 362 to 370 (GGSPWGGNQ), 371 to 379 (GGNPWGGNQ), 380 to 388 (GGSPWGGNQ), 389 to 397 (GGSPWGQGN), 399 to 407 (GGNPWGGNQ), 408 to 416 (GGSPWGGNQ), and 417 to 425 (GGNPWGGNQ). Positions 353–425 (GGSPWGGNQG…QGGNPWGGNQ (73 aa)) are 8 X 9 AA tandem repeats of G-G-[SN]-P-W-G-G-N-Q. Positions 355–425 (SPWGGNQGGS…QGGNPWGGNQ (71 aa)) are enriched in gly residues. Positions 426 to 445 (WGAPQNAAAPQSAAAPQNAS) are enriched in low complexity. Asparagine 443 carries an N-linked (GlcNAc...) asparagine glycan. Positions 449–484 (NCASLWGQCGGQGYNGPSCCSEGSCKPINEYFHQCQ) constitute a CBM1 domain.

It belongs to the glycosyl hydrolase 11 (cellulase G) family.

It localises to the secreted. The enzyme catalyses Endohydrolysis of (1-&gt;4)-beta-D-xylosidic linkages in xylans.. It participates in glycan degradation; xylan degradation. Endo-1,4-beta-xylanase involved in the hydrolysis of xylan, a major structural heterogeneous polysaccharide found in plant biomass representing the second most abundant polysaccharide in the biosphere, after cellulose. This chain is Endo-1,4-beta-xylanase C (xynC), found in Neocallimastix patriciarum (Rumen fungus).